A 294-amino-acid polypeptide reads, in one-letter code: MEIIEGKMPFMGYETYYRIVGERSEKPPLVLLHGGPGSSHNYFEVLDELAQKDGRRIIMYDQLGCGESSIPDDHPELYTKETWVKELEALREHLALRKMHLLGQSWGGMLAIIYMCDYHPEGIQSLILSSTLSSASLWSKELHRMIKYLPIEEQAAIHRAELTGNFNDPDYLKANEHFMNQHAIDMTKTWPECVMRKKRGGTVAYETAWGPNEYTPEGNLHDYEYTDKLSKIKVPTLITSGTDDLCTPYVAKTMQDQIASSKWRLFEGCGHMSFVEKTDEYVALLQEWLDQHDE.

An AB hydrolase-1 domain is found at 27–277 (PPLVLLHGGP…GCGHMSFVEK (251 aa)). The Nucleophile role is filled by S105. D244 is a catalytic residue. The active-site Proton donor is the H271.

The protein belongs to the peptidase S33 family.

The protein resides in the cell envelope. It catalyses the reaction Release of N-terminal proline from a peptide.. In terms of biological role, releases the N-terminal proline from various substrates. This is Proline iminopeptidase from Lactobacillus helveticus (strain DPC 4571).